The following is a 307-amino-acid chain: tRNA dimethylallyltransferase (307 aa).

8 to 15 (GPTGSGKS) is a binding site for ATP. Residue 10–15 (TGSGKS) coordinates substrate. An interaction with substrate tRNA region spans residues 33–36 (DSLQ).

The protein belongs to the IPP transferase family. As to quaternary structure, monomer. The cofactor is Mg(2+).

The catalysed reaction is adenosine(37) in tRNA + dimethylallyl diphosphate = N(6)-dimethylallyladenosine(37) in tRNA + diphosphate. Functionally, catalyzes the transfer of a dimethylallyl group onto the adenine at position 37 in tRNAs that read codons beginning with uridine, leading to the formation of N6-(dimethylallyl)adenosine (i(6)A). The sequence is that of tRNA dimethylallyltransferase from Solibacter usitatus (strain Ellin6076).